The sequence spans 701 residues: Polyribonucleotide nucleotidyltransferase (701 aa).

The Mg(2+) site is built by aspartate 485 and aspartate 491. One can recognise a KH domain in the interval proline 552 to isoleucine 611. Positions glycine 621–lysine 689 constitute an S1 motif domain.

Belongs to the polyribonucleotide nucleotidyltransferase family. Mg(2+) is required as a cofactor.

Its subcellular location is the cytoplasm. It carries out the reaction RNA(n+1) + phosphate = RNA(n) + a ribonucleoside 5'-diphosphate. Involved in mRNA degradation. Catalyzes the phosphorolysis of single-stranded polyribonucleotides processively in the 3'- to 5'-direction. The chain is Polyribonucleotide nucleotidyltransferase from Caldicellulosiruptor bescii (strain ATCC BAA-1888 / DSM 6725 / KCTC 15123 / Z-1320) (Anaerocellum thermophilum).